The sequence spans 396 residues: Ribosomal RNA large subunit methyltransferase I (396 aa).

The region spanning 2 to 81 (SVRLVLAKGR…ETIDIAFFTR (80 aa)) is the PUA domain.

The protein belongs to the methyltransferase superfamily. RlmI family.

Its subcellular location is the cytoplasm. It carries out the reaction cytidine(1962) in 23S rRNA + S-adenosyl-L-methionine = 5-methylcytidine(1962) in 23S rRNA + S-adenosyl-L-homocysteine + H(+). In terms of biological role, specifically methylates the cytosine at position 1962 (m5C1962) of 23S rRNA. The sequence is that of Ribosomal RNA large subunit methyltransferase I from Cronobacter sakazakii (strain ATCC BAA-894) (Enterobacter sakazakii).